The chain runs to 152 residues: Smith-Magenis syndrome chromosomal region candidate gene 5 protein homolog (152 aa).

The interval 41–77 (TPCAGPSSQAPPQPPQASPPAAPDHSRTPSLLASSHS) is disordered. The span at 49-62 (QAPPQPPQASPPAA) shows a compositional bias: pro residues.

This is Smith-Magenis syndrome chromosomal region candidate gene 5 protein homolog (SMCR5) from Macaca fascicularis (Crab-eating macaque).